A 349-amino-acid polypeptide reads, in one-letter code: Protein AMBP (349 aa).

Residues 1-19 (MQGLRTLFLLLTACLASRA) form the signal peptide. Residue Asn33 is glycosylated (N-linked (GlcNAc...) asparagine). The 3-hydroxy-L-kynurenine site is built by Cys52 and Lys110. The cysteines at positions 90 and 187 are disulfide-linked. Residue Asn114 is glycosylated (N-linked (GlcNAc...) asparagine). 3-hydroxy-L-kynurenine contacts are provided by Lys136 and Lys148. Ser214 carries an O-linked (Xyl...) (chondroitin sulfate) serine glycan. 6 disulfides stabilise this stretch: Cys230/Cys280, Cys239/Cys263, Cys255/Cys276, Cys286/Cys336, Cys295/Cys319, and Cys311/Cys332. BPTI/Kunitz inhibitor domains follow at residues 230–280 (CQLN…LQTC) and 286–336 (CNLP…KEYC). Residue Asn233 is glycosylated (N-linked (GlcNAc...) asparagine).

It in the N-terminal section; belongs to the calycin superfamily. Lipocalin family. As to quaternary structure, monomer. Homodimer. In plasma, it occurs as a monomer or dimer and in covalently-linked complexes with immunoglobulin A (IgA), ALB/albumin and F2/prothrombin. Chromophore-bound alpha-1-microglobulin interacts with the constant region of immunoglobulin A. Chromophore-bound alpha-1-microglobulin interacts with ALB with molar ratio 2:1 and 1:1; this interaction does not prevent fatty acid binding to ALB. Interacts with F2/prothrombin (via N-terminus) with molar ratio 2:1 and 1:1; this interaction does not prevent the activation of prothrombin to thrombin. Interacts with NDUFAB1, a subunit of mitochondrial complex I. Interacts with FN1. In terms of assembly, I-alpha-I plasma protease inhibitors are assembled from one or two heavy chains (HC) and one light chain, bikunin. Inter-alpha-inhibitor (I-alpha-I) is composed of ITIH1/HC1, ITIH2/HC2 and bikunin, and pre-alpha-inhibitor (P-alpha-I) of ITIH3/HC3 and bikunin. Interacts with TNFAIP6 (via Link domain). Monomer. Also occurs as a complex with tryptase in mast cells. The precursor is proteolytically processed into separately functioning proteins. Post-translationally, 3-hydroxykynurenine, an oxidized tryptophan metabolite that is common in biological fluids, reacts with Cys-53, Lys-111, Lys-137, and Lys-149 to form heterogeneous polycyclic chromophores including hydroxanthommatin. The reaction by alpha-1-microglobulin is autocatalytic; the human protein forms chromophore even when expressed in insect and bacterial cells. The chromophore can react with accessible cysteines forming non-reducible thioether cross-links with other molecules of alpha-1-microglobulin or with other proteins such as Ig alpha-1 chain C region 'Cys-352'. In terms of processing, heavy chains are interlinked with bikunin via a chondroitin 4-sulfate bridge to the C-terminal aspartate. Proteolytically cleaved by PRSS3 at Kunitz domain 2. Expressed by the liver and secreted in plasma (at protein level).

It localises to the secreted. Its subcellular location is the endoplasmic reticulum. It is found in the cytoplasm. The protein localises to the cytosol. The protein resides in the cell membrane. It localises to the nucleus membrane. Its subcellular location is the mitochondrion inner membrane. It is found in the extracellular space. The protein localises to the extracellular matrix. Functionally, antioxidant and tissue repair protein with reductase, heme-binding and radical-scavenging activities. Removes and protects against harmful oxidants and repairs macromolecules in intravascular and extravascular spaces and in intracellular compartments. Intravascularly, plays a regulatory role in red cell homeostasis by preventing heme- and reactive oxygen species-induced cell damage. Binds and degrades free heme to protect fetal and adult red blood cells from hemolysis. Reduces extracellular methemoglobin, a Fe3+ (ferric) form of hemoglobin that cannot bind oxygen, back to the Fe2+ (ferrous) form deoxyhemoglobin, which has oxygen-carrying potential. Upon acute inflammation, inhibits oxidation of low-density lipoprotein particles by MPO and limits vascular damage. Extravascularly, protects from oxidation products formed on extracellular matrix structures and cell membranes. Catalyzes the reduction of carbonyl groups on oxidized collagen fibers and preserves cellular and extracellular matrix ultrastructures. Importantly, counteracts the oxidative damage at blood-placenta interface, preventing leakage of free fetal hemoglobin into the maternal circulation. Intracellularly, has a role in maintaining mitochondrial redox homeostasis. Bound to complex I of the respiratory chain of mitochondria, may scavenge free radicals and preserve mitochondrial ATP synthesis. Protects renal tubule epithelial cells from heme-induced oxidative damage to mitochondria. Reduces cytochrome c from Fe3+ (ferric) to the Fe2+ (ferrous) state through formation of superoxide anion radicals in the presence of ascorbate or NADH/NADPH electron donor cofactors, ascorbate being the preferred cofactor. Has a chaperone role in facilitating the correct folding of bikunin in the endoplasmic reticulum compartment. In terms of biological role, kunitz-type serine protease inhibitor and structural component of extracellular matrix with a role in extracellular space remodeling and cell adhesion. Among others, has antiprotease activity toward kallikrein, a protease involved in airway inflammation; inhibits GZMK/granzyme, a granule-stored serine protease involved in NK and T cell cytotoxic responses; and inhibits PLG/plasmin, a protease required for activation of matrix metalloproteinases. As part of I-alpha-I complex, provides for the heavy chains to be transferred from I-alpha-I complex to hyaluronan in the presence of TNFAIP6, in a dynamic process that releases free bikunin and remodels extracellular matrix proteoglycan structures. Free bikunin, but not its heavy chain-bound form, acts as a potent protease inhibitor in airway secretions. Part of hyaluronan-rich extracellular matrix that surrounds oocyte during cumulus oophorus expansion, an indispensable process for proper ovulation. Also inhibits calcium oxalate crystallization. Kunitz-type serine protease inhibitor. Has high catalytic efficiency for F10/blood coagulation factor Xa and may act as an anticoagulant by inhibiting prothrombin activation. Inhibits trypsin and mast cell CMA1/chymase and tryptase proteases. The protein is Protein AMBP (Ambp) of Mus musculus (Mouse).